A 262-amino-acid polypeptide reads, in one-letter code: Zinc import ATP-binding protein ZnuC (262 aa).

Residues 4–220 (LNLSGVRLSH…PEYLALFGPR (217 aa)) enclose the ABC transporter domain. 36–43 (GPNGAGKS) serves as a coordination point for ATP. Residues 238–262 (ADGSVLPLAEGGGEPHTHGPGCRHG) are disordered.

This sequence belongs to the ABC transporter superfamily. Zinc importer (TC 3.A.1.15.5) family. As to quaternary structure, the complex is composed of two ATP-binding proteins (ZnuC), two transmembrane proteins (ZnuB) and a solute-binding protein (ZnuA).

The protein localises to the cell inner membrane. It catalyses the reaction Zn(2+)(out) + ATP(in) + H2O(in) = Zn(2+)(in) + ADP(in) + phosphate(in) + H(+)(in). Functionally, part of the ABC transporter complex ZnuABC involved in zinc import. Responsible for energy coupling to the transport system. This chain is Zinc import ATP-binding protein ZnuC, found in Paramagnetospirillum magneticum (strain ATCC 700264 / AMB-1) (Magnetospirillum magneticum).